Reading from the N-terminus, the 187-residue chain is Ribosome-recycling factor (187 aa).

It belongs to the RRF family.

It is found in the cytoplasm. Its function is as follows. Responsible for the release of ribosomes from messenger RNA at the termination of protein biosynthesis. May increase the efficiency of translation by recycling ribosomes from one round of translation to another. This is Ribosome-recycling factor from Methylobacterium nodulans (strain LMG 21967 / CNCM I-2342 / ORS 2060).